We begin with the raw amino-acid sequence, 358 residues long: MQNTTLFILATLLIFCPFFTASAWSVNNFLMTGPKAYLTYSASVAVGAQNGIEECKYQFAWERWNCPESTLQLATHNGLRSATRETSFVHAISSAGVMYTLTRNCSMGDFDNCGCDDSRNGRIGGRGWVWGGCSDNAEFGERISKLFVDGLETGQDARALMNLHNNEAGRLAVKETMKRTCKCHGISGSCSIQTCWLQLAEFRDIGNHLKIKHDQALKLEMDKRKMRSGNSADNRGAIADAFSSVAGSELIFLEDSPDYCLKNISLGLQGTEGRECLQSGKNLSQWERRSCKRLCTDCGLRVEEKKTEIISSCNCKFHWCCTVKCEQCKQVVIKHFCARRERDSNMLNTKRKNRGHRR.

The signal sequence occupies residues 1-22 (MQNTTLFILATLLIFCPFFTAS). A disulfide bridge connects residues C55 and C66. N-linked (GlcNAc...) asparagine glycosylation is present at N104. Cystine bridges form between C105–C113, C115–C133, C181–C195, C183–C190, C260–C298, C276–C291, C295–C337, C313–C328, C315–C325, and C320–C321. S187 carries the O-palmitoleoyl serine lipid modification. N263 and N282 each carry an N-linked (GlcNAc...) asparagine glycan.

Belongs to the Wnt family. As to quaternary structure, homooligomer; disulfide-linked, leading to inactivation. Interacts with the long chain of cer1. Palmitoleoylation is required for efficient binding to frizzled receptors. Depalmitoleoylation leads to Wnt signaling pathway inhibition. In terms of processing, proteolytic processing by tiki1 and tiki2 promotes oxidation and formation of large disulfide-bond oligomers, leading to inactivation of wnt8.

The protein localises to the secreted. The protein resides in the extracellular space. It is found in the extracellular matrix. Functionally, ligand for members of the frizzled family of seven transmembrane receptors. Plays a role in ventral mesodermal patterning during embryogenesis. Mimics Nieuwkoop center activity. Causes dorsal mesodermal differentiation of animal cap ectoderm when coexpressed with noggin and nuclear, sequence-specific DNA-binding protein xBra. None of these molecules causes dorsal mesoderm formation when expressed alone. In Xenopus laevis (African clawed frog), this protein is Protein Wnt-8 (wnt8).